The following is a 366-amino-acid chain: Probable dual-specificity RNA methyltransferase RlmN (366 aa).

Glu108 serves as the catalytic Proton acceptor. In terms of domain architecture, Radical SAM core spans 114 to 352 (YSDRSTLCIS…CTVRDTKGQE (239 aa)). The cysteines at positions 121 and 357 are disulfide-linked. The [4Fe-4S] cluster site is built by Cys128, Cys132, and Cys135. S-adenosyl-L-methionine-binding positions include 178 to 179 (GE), Ser212, 235 to 237 (SLH), and Asn314. Residue Cys357 is the S-methylcysteine intermediate of the active site.

The protein belongs to the radical SAM superfamily. RlmN family. Requires [4Fe-4S] cluster as cofactor.

The protein resides in the cytoplasm. It carries out the reaction adenosine(2503) in 23S rRNA + 2 reduced [2Fe-2S]-[ferredoxin] + 2 S-adenosyl-L-methionine = 2-methyladenosine(2503) in 23S rRNA + 5'-deoxyadenosine + L-methionine + 2 oxidized [2Fe-2S]-[ferredoxin] + S-adenosyl-L-homocysteine. It catalyses the reaction adenosine(37) in tRNA + 2 reduced [2Fe-2S]-[ferredoxin] + 2 S-adenosyl-L-methionine = 2-methyladenosine(37) in tRNA + 5'-deoxyadenosine + L-methionine + 2 oxidized [2Fe-2S]-[ferredoxin] + S-adenosyl-L-homocysteine. Functionally, specifically methylates position 2 of adenine 2503 in 23S rRNA and position 2 of adenine 37 in tRNAs. In Corynebacterium glutamicum (strain ATCC 13032 / DSM 20300 / JCM 1318 / BCRC 11384 / CCUG 27702 / LMG 3730 / NBRC 12168 / NCIMB 10025 / NRRL B-2784 / 534), this protein is Probable dual-specificity RNA methyltransferase RlmN.